The primary structure comprises 502 residues: tRNA-specific adenosine deaminase 1 (502 aa).

Positions 63 to 501 constitute an A to I editase domain; it reads SMGTGTKCIG…IRNPPDYHQF (439 aa). Residue His87 participates in Zn(2+) binding. Residue Glu89 is the Proton donor of the active site. The 1D-myo-inositol hexakisphosphate site is built by Arg93 and Arg94. Cys142 provides a ligand contact to Zn(2+). Ser191 is modified (phosphoserine). Position 299 (Cys299) interacts with Zn(2+). 1D-myo-inositol hexakisphosphate is bound by residues Lys302, Arg305, Lys435, and Lys470.

It belongs to the ADAT1 family. It depends on 1D-myo-inositol hexakisphosphate as a cofactor.

The enzyme catalyses adenosine(37) in tRNA(Ala) + H2O + H(+) = inosine(37) in tRNA(Ala) + NH4(+). Its function is as follows. Specifically deaminates adenosine-37 to inosine in tRNA-Ala. This chain is tRNA-specific adenosine deaminase 1 (ADAT1), found in Macaca fascicularis (Crab-eating macaque).